The sequence spans 453 residues: Malate dehydrogenase [NADP], chloroplastic (453 aa).

Residues 1 to 68 (MAVVKLSPWA…RLSSPASIRC (68 aa)) constitute a chloroplast transit peptide. A disulfide bridge connects residues Cys88 and Cys93. 117–123 (GAAGMIS) lines the NADP(+) pocket. Substrate is bound by residues Arg198 and Arg204. Residues Asn211, Gln218, and 235 to 237 (VGN) contribute to the NADP(+) site. Substrate-binding residues include Asn237 and Arg268. The active-site Proton acceptor is His293. Cys429 and Cys441 are oxidised to a cystine.

This sequence belongs to the LDH/MDH superfamily. MDH type 2 family. Homodimer.

The protein localises to the plastid. It is found in the chloroplast. It catalyses the reaction (S)-malate + NADP(+) = oxaloacetate + NADPH + H(+). Chloroplast NADP-MDH is activated upon illumination. In order to be enzymatically active, disulfide bridges on the protein must be reduced by thioredoxin which receives electrons from ferredoxin and the electron transport system of photosynthesis. Its function is as follows. The chloroplastic, NADP-dependent form is essential for the photosynthesis C4 cycle, which allows plants to circumvent the problem of photorespiration. In C4 plants, NADP-MDH activity acts to convert oxaloacetate to malate in chloroplasts of mesophyll cells for transport to the bundle sheath cells. The polypeptide is Malate dehydrogenase [NADP], chloroplastic (Flaveria bidentis (Coastal plain yellowtops)).